The following is a 299-amino-acid chain: ATP phosphoribosyltransferase (299 aa).

This sequence belongs to the ATP phosphoribosyltransferase family. Long subfamily. The cofactor is Mg(2+).

It localises to the cytoplasm. It carries out the reaction 1-(5-phospho-beta-D-ribosyl)-ATP + diphosphate = 5-phospho-alpha-D-ribose 1-diphosphate + ATP. Its pathway is amino-acid biosynthesis; L-histidine biosynthesis; L-histidine from 5-phospho-alpha-D-ribose 1-diphosphate: step 1/9. Feedback inhibited by histidine. Functionally, catalyzes the condensation of ATP and 5-phosphoribose 1-diphosphate to form N'-(5'-phosphoribosyl)-ATP (PR-ATP). Has a crucial role in the pathway because the rate of histidine biosynthesis seems to be controlled primarily by regulation of HisG enzymatic activity. This chain is ATP phosphoribosyltransferase, found in Shewanella frigidimarina (strain NCIMB 400).